Consider the following 359-residue polypeptide: sn-1 linoleoyl-lipid 6-desaturase (359 aa).

Transmembrane regions (helical) follow at residues 45 to 65 (LIIV…PVIF) and 69 to 89 (LLGC…VGHD). The Histidine box-1 signature appears at 88–92 (HDANH). Residues 123–128 (HNYLHH) carry the Histidine box-2 motif. Transmembrane regions (helical) follow at residues 165 to 185 (IWGL…YLVL), 206 to 226 (LLGI…ALGF), and 231 to 251 (VLIG…TIFM). Positions 306-310 (HHLFP) match the Histidine box-3 motif.

This sequence belongs to the fatty acid desaturase type 2 family. Requires Fe(2+) as cofactor.

The protein resides in the membrane. It carries out the reaction a 1-[(9Z,12Z)-octadecdienoyl]-2-acyl-glycerolipid + 2 reduced [2Fe-2S]-[ferredoxin] + O2 + 2 H(+) = a 1-[(6Z,9Z,12Z)-octadectrienoyl]-2-acyl-glycerolipid + 2 oxidized [2Fe-2S]-[ferredoxin] + 2 H2O. It participates in lipid metabolism; polyunsaturated fatty acid biosynthesis. Functionally, desaturase involved in fatty acid biosynthesis. Introduces a double bond at carbon 6 of linoleoyl group (18:2) attached to the sn-1 position of the glycerol moiety of membrane glycerolipids, leading to the formation of gamma-linolenic acid (GLA). This Synechocystis sp. (strain ATCC 27184 / PCC 6803 / Kazusa) protein is sn-1 linoleoyl-lipid 6-desaturase.